The chain runs to 354 residues: Probable L-ascorbate-6-phosphate lactonase UlaG (354 aa).

It belongs to the UlaG family. The cofactor is a divalent metal cation.

The protein localises to the cytoplasm. It catalyses the reaction L-ascorbate 6-phosphate + H2O = 3-dehydro-L-gulonate 6-phosphate. It participates in cofactor degradation; L-ascorbate degradation; D-xylulose 5-phosphate from L-ascorbate: step 1/4. In terms of biological role, probably catalyzes the hydrolysis of L-ascorbate-6-P into 3-keto-L-gulonate-6-P. Is essential for L-ascorbate utilization under anaerobic conditions. In Shigella flexneri, this protein is Probable L-ascorbate-6-phosphate lactonase UlaG.